A 37-amino-acid polypeptide reads, in one-letter code: Large ribosomal subunit protein bL36 (37 aa).

Belongs to the bacterial ribosomal protein bL36 family.

The polypeptide is Large ribosomal subunit protein bL36 (Idiomarina loihiensis (strain ATCC BAA-735 / DSM 15497 / L2-TR)).